A 311-amino-acid chain; its full sequence is tRNA-cytidine(32) 2-sulfurtransferase (311 aa).

Positions 47–52 (SGGKDS) match the PP-loop motif motif. The [4Fe-4S] cluster site is built by C122, C125, and C213.

The protein belongs to the TtcA family. In terms of assembly, homodimer. Requires Mg(2+) as cofactor. It depends on [4Fe-4S] cluster as a cofactor.

The protein localises to the cytoplasm. The enzyme catalyses cytidine(32) in tRNA + S-sulfanyl-L-cysteinyl-[cysteine desulfurase] + AH2 + ATP = 2-thiocytidine(32) in tRNA + L-cysteinyl-[cysteine desulfurase] + A + AMP + diphosphate + H(+). The protein operates within tRNA modification. Functionally, catalyzes the ATP-dependent 2-thiolation of cytidine in position 32 of tRNA, to form 2-thiocytidine (s(2)C32). The sulfur atoms are provided by the cysteine/cysteine desulfurase (IscS) system. In Shigella boydii serotype 18 (strain CDC 3083-94 / BS512), this protein is tRNA-cytidine(32) 2-sulfurtransferase.